Consider the following 147-residue polypeptide: Holo-[acyl-carrier-protein] synthase (147 aa).

Mg(2+)-binding residues include aspartate 7 and glutamate 60.

This sequence belongs to the P-Pant transferase superfamily. AcpS family. The cofactor is Mg(2+).

It localises to the cytoplasm. The enzyme catalyses apo-[ACP] + CoA = holo-[ACP] + adenosine 3',5'-bisphosphate + H(+). Transfers the 4'-phosphopantetheine moiety from coenzyme A to a Ser of acyl-carrier-protein. This is Holo-[acyl-carrier-protein] synthase from Bifidobacterium animalis subsp. lactis (strain AD011).